Here is a 364-residue protein sequence, read N- to C-terminus: UDP-N-acetylglucosamine--N-acetylmuramyl-(pentapeptide) pyrophosphoryl-undecaprenol N-acetylglucosamine transferase (364 aa).

UDP-N-acetyl-alpha-D-glucosamine-binding positions include 10–12, Asn-124, Ser-195, and Gln-295; that span reads TGG.

It belongs to the glycosyltransferase 28 family. MurG subfamily.

Its subcellular location is the cell membrane. The enzyme catalyses di-trans,octa-cis-undecaprenyl diphospho-N-acetyl-alpha-D-muramoyl-L-alanyl-D-glutamyl-meso-2,6-diaminopimeloyl-D-alanyl-D-alanine + UDP-N-acetyl-alpha-D-glucosamine = di-trans,octa-cis-undecaprenyl diphospho-[N-acetyl-alpha-D-glucosaminyl-(1-&gt;4)]-N-acetyl-alpha-D-muramoyl-L-alanyl-D-glutamyl-meso-2,6-diaminopimeloyl-D-alanyl-D-alanine + UDP + H(+). Its pathway is cell wall biogenesis; peptidoglycan biosynthesis. In terms of biological role, cell wall formation. Catalyzes the transfer of a GlcNAc subunit on undecaprenyl-pyrophosphoryl-MurNAc-pentapeptide (lipid intermediate I) to form undecaprenyl-pyrophosphoryl-MurNAc-(pentapeptide)GlcNAc (lipid intermediate II). In Bacillus pumilus (strain SAFR-032), this protein is UDP-N-acetylglucosamine--N-acetylmuramyl-(pentapeptide) pyrophosphoryl-undecaprenol N-acetylglucosamine transferase.